A 369-amino-acid chain; its full sequence is tRNA-specific 2-thiouridylase MnmA (369 aa).

Residues 12 to 19 (GMSGGVDS) and methionine 38 contribute to the ATP site. The interval 98 to 100 (NPD) is interaction with target base in tRNA. Cysteine 103 serves as the catalytic Nucleophile. Cysteine 103 and cysteine 200 are disulfide-bonded. Residue glycine 128 participates in ATP binding. Residues 150-152 (KDQ) form an interaction with tRNA region. Cysteine 200 functions as the Cysteine persulfide intermediate in the catalytic mechanism. An interaction with tRNA region spans residues 312–313 (RY).

It belongs to the MnmA/TRMU family.

It is found in the cytoplasm. The enzyme catalyses S-sulfanyl-L-cysteinyl-[protein] + uridine(34) in tRNA + AH2 + ATP = 2-thiouridine(34) in tRNA + L-cysteinyl-[protein] + A + AMP + diphosphate + H(+). Its function is as follows. Catalyzes the 2-thiolation of uridine at the wobble position (U34) of tRNA, leading to the formation of s(2)U34. The chain is tRNA-specific 2-thiouridylase MnmA from Tolumonas auensis (strain DSM 9187 / NBRC 110442 / TA 4).